Reading from the N-terminus, the 148-residue chain is Large ribosomal subunit protein bL9 (148 aa).

It belongs to the bacterial ribosomal protein bL9 family.

Binds to the 23S rRNA. In Listeria monocytogenes serotype 4a (strain HCC23), this protein is Large ribosomal subunit protein bL9.